A 317-amino-acid chain; its full sequence is Phospho-N-acetylmuramoyl-pentapeptide-transferase (317 aa).

Helical transmembrane passes span 6–26, 52–72, 78–98, 114–134, 145–165, 171–191, 194–214, 223–244, and 297–317; these read IVMA…IIIP, PTIG…IMVG, AMIA…DDLL, MILL…YIGT, INFG…VTNA, GLDG…GIIS, LGHI…LAFL, VFMG…ALIL, and KIVS…FASL.

Belongs to the glycosyltransferase 4 family. MraY subfamily. Requires Mg(2+) as cofactor.

The protein resides in the cell membrane. It carries out the reaction UDP-N-acetyl-alpha-D-muramoyl-L-alanyl-gamma-D-glutamyl-meso-2,6-diaminopimeloyl-D-alanyl-D-alanine + di-trans,octa-cis-undecaprenyl phosphate = di-trans,octa-cis-undecaprenyl diphospho-N-acetyl-alpha-D-muramoyl-L-alanyl-D-glutamyl-meso-2,6-diaminopimeloyl-D-alanyl-D-alanine + UMP. It participates in cell wall biogenesis; peptidoglycan biosynthesis. Catalyzes the initial step of the lipid cycle reactions in the biosynthesis of the cell wall peptidoglycan: transfers peptidoglycan precursor phospho-MurNAc-pentapeptide from UDP-MurNAc-pentapeptide onto the lipid carrier undecaprenyl phosphate, yielding undecaprenyl-pyrophosphoryl-MurNAc-pentapeptide, known as lipid I. In Clostridium perfringens (strain 13 / Type A), this protein is Phospho-N-acetylmuramoyl-pentapeptide-transferase.